Here is a 302-residue protein sequence, read N- to C-terminus: Probable 2-(5''-triphosphoribosyl)-3'-dephosphocoenzyme-A synthase 1 (302 aa).

This sequence belongs to the CitG/MdcB family.

It catalyses the reaction 3'-dephospho-CoA + ATP = 2'-(5''-triphospho-alpha-D-ribosyl)-3'-dephospho-CoA + adenine. In Salmonella paratyphi A (strain ATCC 9150 / SARB42), this protein is Probable 2-(5''-triphosphoribosyl)-3'-dephosphocoenzyme-A synthase 1.